The following is a 96-amino-acid chain: Small ribosomal subunit protein bS6 (96 aa).

Belongs to the bacterial ribosomal protein bS6 family.

In terms of biological role, binds together with bS18 to 16S ribosomal RNA. The sequence is that of Small ribosomal subunit protein bS6 from Salinispora tropica (strain ATCC BAA-916 / DSM 44818 / JCM 13857 / NBRC 105044 / CNB-440).